We begin with the raw amino-acid sequence, 709 residues long: Ribosomal RNA large subunit methyltransferase K/L (709 aa).

The 112-residue stretch at 43–154 (LAYRITLWTR…NGVITIAMNF (112 aa)) folds into the THUMP domain.

The protein belongs to the methyltransferase superfamily. RlmKL family.

Its subcellular location is the cytoplasm. The enzyme catalyses guanosine(2445) in 23S rRNA + S-adenosyl-L-methionine = N(2)-methylguanosine(2445) in 23S rRNA + S-adenosyl-L-homocysteine + H(+). It catalyses the reaction guanosine(2069) in 23S rRNA + S-adenosyl-L-methionine = N(2)-methylguanosine(2069) in 23S rRNA + S-adenosyl-L-homocysteine + H(+). Functionally, specifically methylates the guanine in position 2445 (m2G2445) and the guanine in position 2069 (m7G2069) of 23S rRNA. This chain is Ribosomal RNA large subunit methyltransferase K/L, found in Shewanella baltica (strain OS195).